The chain runs to 31 residues: U14-ctenitoxin-Co1c (31 aa).

Expressed by the venom gland.

It is found in the secreted. Functionally, not toxic to mice by intracerebroventricular injection. This chain is U14-ctenitoxin-Co1c, found in Ctenus ornatus (Brazilian spider).